We begin with the raw amino-acid sequence, 846 residues long: Structure-specific endonuclease subunit SLX4 (846 aa).

Disordered stretches follow at residues methionine 1–alanine 20, lysine 84–methionine 111, glutamine 123–alanine 164, arginine 283–threonine 322, aspartate 480–leucine 513, proline 624–glutamine 690, and threonine 723–alanine 751. Over residues lysine 141–alanine 153 the composition is skewed to basic and acidic residues. Positions leucine 293–glycine 303 are enriched in polar residues. The span at lysine 306 to lysine 318 shows a compositional bias: basic residues. 2 stretches are compositionally biased toward polar residues: residues lysine 657–threonine 680 and alanine 725–alanine 751.

It belongs to the SLX4 family. As to quaternary structure, forms a heterodimer with SLX1. In terms of processing, phosphorylated in response to DNA damage.

Its subcellular location is the nucleus. Regulatory subunit of the SLX1-SLX4 structure-specific endonuclease that resolves DNA secondary structures generated during DNA repair and recombination. Has endonuclease activity towards branched DNA substrates, introducing single-strand cuts in duplex DNA close to junctions with ss-DNA. This chain is Structure-specific endonuclease subunit SLX4, found in Arthroderma otae (strain ATCC MYA-4605 / CBS 113480) (Microsporum canis).